The primary structure comprises 459 residues: U-box domain-containing protein 75 (459 aa).

The region spanning 64-138 is the U-box domain; the sequence is AVPAVFICPI…AAWFSRRYTR (75 aa). ARM repeat units lie at residues 188–229 and 231–270; these read QSVT…GVPL and ADAK…ILME.

Interacts with GPA1. Expressed highly in panicles at flowering time, at moderate levels in vegetative shoot apices, leaf sheaths, leaf blades, and elongating internodes, and at low levels in roots.

The protein localises to the cell membrane. It catalyses the reaction S-ubiquitinyl-[E2 ubiquitin-conjugating enzyme]-L-cysteine + [acceptor protein]-L-lysine = [E2 ubiquitin-conjugating enzyme]-L-cysteine + N(6)-ubiquitinyl-[acceptor protein]-L-lysine.. It participates in protein modification; protein ubiquitination. In terms of biological role, E3 ubiquitin ligase that may function as positive regulator of brassinosteroid (BR) signaling. Possesses E3 ubiquitin ligase in vitro. Acts together with the heterotrimeric G alpha subunit GPA1 at the plasma membrane to mediate a BR signaling pathway that affects plant growth and development. Does not seem to be involved in gibberellin or cytokinin responses. This Oryza sativa subsp. japonica (Rice) protein is U-box domain-containing protein 75.